Reading from the N-terminus, the 153-residue chain is 6,7-dimethyl-8-ribityllumazine synthase (153 aa).

Residues Phe-22, Ala-56–Glu-58, and Ala-80–Ile-82 each bind 5-amino-6-(D-ribitylamino)uracil. Ser-85–Thr-86 serves as a coordination point for (2S)-2-hydroxy-3-oxobutyl phosphate. His-88 (proton donor) is an active-site residue. Phe-113 is a binding site for 5-amino-6-(D-ribitylamino)uracil. Arg-127 lines the (2S)-2-hydroxy-3-oxobutyl phosphate pocket.

Belongs to the DMRL synthase family.

The catalysed reaction is (2S)-2-hydroxy-3-oxobutyl phosphate + 5-amino-6-(D-ribitylamino)uracil = 6,7-dimethyl-8-(1-D-ribityl)lumazine + phosphate + 2 H2O + H(+). It participates in cofactor biosynthesis; riboflavin biosynthesis; riboflavin from 2-hydroxy-3-oxobutyl phosphate and 5-amino-6-(D-ribitylamino)uracil: step 1/2. Its function is as follows. Catalyzes the formation of 6,7-dimethyl-8-ribityllumazine by condensation of 5-amino-6-(D-ribitylamino)uracil with 3,4-dihydroxy-2-butanone 4-phosphate. This is the penultimate step in the biosynthesis of riboflavin. The polypeptide is 6,7-dimethyl-8-ribityllumazine synthase (Clostridium botulinum (strain Eklund 17B / Type B)).